Reading from the N-terminus, the 377-residue chain is Glutamate 5-kinase (377 aa).

Lys-22 serves as a coordination point for ATP. Substrate is bound by residues Ser-62, Asp-149, and Asn-161. ATP is bound by residues 181–182 (TD) and 223–229 (TGGMVTK). The region spanning 285-363 (RGTIVVDAGA…AQLKRFLGPQ (79 aa)) is the PUA domain.

It belongs to the glutamate 5-kinase family.

Its subcellular location is the cytoplasm. The enzyme catalyses L-glutamate + ATP = L-glutamyl 5-phosphate + ADP. It functions in the pathway amino-acid biosynthesis; L-proline biosynthesis; L-glutamate 5-semialdehyde from L-glutamate: step 1/2. Functionally, catalyzes the transfer of a phosphate group to glutamate to form L-glutamate 5-phosphate. This is Glutamate 5-kinase from Bifidobacterium longum (strain DJO10A).